Reading from the N-terminus, the 542-residue chain is Chaperonin GroEL 3 (542 aa).

ATP contacts are provided by residues 29–32, 86–90, Gly413, 477–479, and Asp493; these read TLGP, DGTTT, and NAA.

The protein belongs to the chaperonin (HSP60) family. As to quaternary structure, forms a cylinder of 14 subunits composed of two heptameric rings stacked back-to-back. Interacts with the co-chaperonin GroES.

It localises to the cytoplasm. It catalyses the reaction ATP + H2O + a folded polypeptide = ADP + phosphate + an unfolded polypeptide.. Together with its co-chaperonin GroES, plays an essential role in assisting protein folding. The GroEL-GroES system forms a nano-cage that allows encapsulation of the non-native substrate proteins and provides a physical environment optimized to promote and accelerate protein folding. The sequence is that of Chaperonin GroEL 3 from Frankia alni (strain DSM 45986 / CECT 9034 / ACN14a).